Reading from the N-terminus, the 487-residue chain is DNA-dependent metalloprotease SPRTN (487 aa).

At Met-1 the chain carries N-acetylmethionine. Positions Leu-45–Ile-212 constitute a SprT-like domain. His-111 is a Zn(2+) binding site. Residue Glu-112 is part of the active site. His-115 and His-130 together coordinate Zn(2+). Residues Ser-219–Gln-248 are disordered. The span at Lys-220–Lys-230 shows a compositional bias: basic residues. Lys-230 is subject to N6-acetyllysine. Positions Ala-236–Lys-247 are enriched in basic and acidic residues. The SHP-box signature appears at Phe-253–Gly-261. At Ser-267 the chain carries Phosphoserine. A compositionally biased stretch (polar residues) spans Ser-280–Ser-289. Positions Ser-280–Pro-317 are disordered. Residue Lys-302 forms a Glycyl lysine isopeptide (Lys-Gly) (interchain with G-Cter in SUMO2) linkage. Residues Asn-306–Pro-317 show a composition bias toward polar residues. Residues Gln-324 to Phe-331 carry the PIP-box motif. A Glycyl lysine isopeptide (Lys-Gly) (interchain with G-Cter in SUMO2); alternate cross-link involves residue Lys-340. Residue Lys-340 forms a Glycyl lysine isopeptide (Lys-Gly) (interchain with G-Cter in ubiquitin); alternate linkage. A disordered region spans residues Gly-347–Arg-379. A Phosphoserine modification is found at Ser-373. A Nuclear localization signal motif is present at residues Gly-401–Asp-412. Lys-413 is covalently cross-linked (Glycyl lysine isopeptide (Lys-Gly) (interchain with G-Cter in ubiquitin)). Glycyl lysine isopeptide (Lys-Gly) (interchain with G-Cter in SUMO2) cross-links involve residues Lys-422 and Lys-423. Positions Gln-427–Val-455 are disordered. The segment covering Ser-435–Ser-453 has biased composition (low complexity). The segment at Val-455–Ser-482 adopts a UBZ4-type zinc-finger fold. Positions 458, 461, 473, and 477 each coordinate Zn(2+). Lys-486 is covalently cross-linked (Glycyl lysine isopeptide (Lys-Gly) (interchain with G-Cter in SUMO2)).

Belongs to the Spartan family. As to quaternary structure, homodimer. Interacts (VIA PIP-box) with PCNA (when ubiquitinated). Interacts (via its SHP-box) with VCP/p97. Interacts with RAD18. Interacts with KCTD13 and POLD3. The cofactor is Zn(2+). Post-translationally, autocatalytically cleaved in response to double-stranded DNA-binding: autocatalytic cleavage takes place in trans and leads to inactivation. Monoubiquitinated; monoubiquitination promotes exclusion from chromatin. Deubiquitinated by VCPIP1: deubiquitination is required for subsequent acetylation and recruitment to chromatin and DNA damage sites. In terms of processing, acetylated following deubiquitination by VCPIP1, leading to recruitment to chromatin and DNA damage sites. Post-translationally, phosphorylation by CHEK1 promotes recruitment to chromatin.

It is found in the nucleus. Its subcellular location is the chromosome. DNA-binding activates the protease activity: single-stranded DNA-binding specifically activates ability to cleave covalent DNA-protein cross-links (DPCs). In contrast, double-stranded DNA-binding specifically activates autocatalytic cleavage, and subsequent inactivation. In terms of biological role, DNA-dependent metalloendopeptidase that mediates the proteolytic cleavage of covalent DNA-protein cross-links (DPCs) during DNA synthesis, thereby playing a key role in maintaining genomic integrity. DPCs are highly toxic DNA lesions that interfere with essential chromatin transactions, such as replication and transcription, and which are induced by reactive agents, such as UV light or formaldehyde. Associates with the DNA replication machinery and specifically removes DPCs during DNA synthesis. Catalyzes proteolytic cleavage of the HMCES DNA-protein cross-link following unfolding by the BRIP1/FANCJ helicase. Acts as a pleiotropic protease for DNA-binding proteins cross-linked with DNA, such as TOP1, TOP2A, histones H3 and H4. Mediates degradation of DPCs that are not ubiquitinated, while it is not able to degrade ubiquitinated DPCs. SPRTN activation requires polymerase collision with DPCs followed by helicase bypass of DPCs. Involved in recruitment of VCP/p97 to sites of DNA damage. Also acts as an activator of CHEK1 during normal DNA replication by mediating proteolytic cleavage of CHEK1, thereby promoting CHEK1 removal from chromatin and subsequent activation. Does not activate CHEK1 in response to DNA damage. May also act as a 'reader' of ubiquitinated PCNA: recruited to sites of UV damage and interacts with ubiquitinated PCNA and RAD18, the E3 ubiquitin ligase that monoubiquitinates PCNA. Facilitates chromatin association of RAD18 and is required for efficient PCNA monoubiquitination, promoting a feed-forward loop to enhance PCNA ubiquitination and translesion DNA synthesis. The sequence is that of DNA-dependent metalloprotease SPRTN from Bos taurus (Bovine).